Reading from the N-terminus, the 473-residue chain is Rop guanine nucleotide exchange factor 3 (473 aa).

The disordered stretch occupies residues 1 to 28; it reads MENLSNPDENDDHQSPRSIDQNDQSAVE. Positions 16 to 28 are enriched in polar residues; sequence PRSIDQNDQSAVE. The PRONE domain maps to 95–473; sequence LVVQEISEPE…YVDKTMRGSE (379 aa).

In terms of biological role, guanine-nucleotide exchange factor (GEF) that acts as an activator of Rop (Rho of plants) GTPases by promoting the exchange of GDP for GTP. This chain is Rop guanine nucleotide exchange factor 3 (ROPGEF3), found in Arabidopsis thaliana (Mouse-ear cress).